Here is a 119-residue protein sequence, read N- to C-terminus: UPF0102 protein HI_1656 (119 aa).

This sequence belongs to the UPF0102 family.

This chain is UPF0102 protein HI_1656, found in Haemophilus influenzae (strain ATCC 51907 / DSM 11121 / KW20 / Rd).